The primary structure comprises 331 residues: NmrA-like family domain-containing oxidoreductase himF (331 aa).

NADP(+) is bound by residues 8–13 (GATGNQ), 34–38 (RNAES), 55–56 (DG), 76–78 (TNG), Lys133, and 155–167 (WFFE…QMAA).

The protein belongs to the NmrA-type oxidoreductase family.

Its pathway is secondary metabolite biosynthesis. In terms of biological role, nmrA-like family domain-containing oxidoreductase; part of the him gene cluster that mediates the biosynthesis of himeic acid A, a ubiquitin-activating enzyme (E1) inhibitor. First, himA, together with the trans-enoyl reductase himH, catalyzes the formation of apolyketide chain, which is then condensed with leucine by the NRPS activity of himA. Dieckmann cyclization and release from himA gives a tetramic acid intermediate as the product of himA PKS-NRPS. HimG then catalyzes alpha-oxidation of the tetramic acid ring, with a subsequent rearrangement to yield apyrone intermediate. Two terminal methyl groups of polyketide and amide side chains are oxidized to carboxylic acids by himC cytochrome P450 monooxygenase to form himeic acid A. Himeic acid A is further converted to himeic acid B and C during culture growth. No gene responsible for pyrone to pyridone conversion was found in the him gene cluster and himeic acid A is non-enzymatically converted to himeic acid C by the incorporation of an ammonium nitrogen atom in a pH5 buffer, and to himeic acid B at a conversion ratio of 50% during incubation in MeOH for 5 days. The sequence is that of NmrA-like family domain-containing oxidoreductase himF from Aspergillus japonicus.